A 691-amino-acid polypeptide reads, in one-letter code: Elongation factor G (691 aa).

Positions 8–282 constitute a tr-type G domain; it reads ERVRNIGIAA…AVVDYLPAPV (275 aa). GTP-binding positions include 17–24, 81–85, and 135–138; these read AHIDAGKT, DTPGH, and NKMD.

This sequence belongs to the TRAFAC class translation factor GTPase superfamily. Classic translation factor GTPase family. EF-G/EF-2 subfamily.

The protein localises to the cytoplasm. In terms of biological role, catalyzes the GTP-dependent ribosomal translocation step during translation elongation. During this step, the ribosome changes from the pre-translocational (PRE) to the post-translocational (POST) state as the newly formed A-site-bound peptidyl-tRNA and P-site-bound deacylated tRNA move to the P and E sites, respectively. Catalyzes the coordinated movement of the two tRNA molecules, the mRNA and conformational changes in the ribosome. The polypeptide is Elongation factor G (Prochlorococcus marinus (strain MIT 9312)).